The sequence spans 420 residues: Probable serine hydroxymethyltransferase (420 aa).

(6S)-5,6,7,8-tetrahydrofolate-binding positions include Leu121 and 125–127 (GHL). Lys230 bears the N6-(pyridoxal phosphate)lysine mark. Residues Glu246 and 354 to 356 (SPF) each bind (6S)-5,6,7,8-tetrahydrofolate.

Belongs to the SHMT family. As to quaternary structure, homodimer. The cofactor is pyridoxal 5'-phosphate.

It localises to the cytoplasm. The catalysed reaction is (6R)-5,10-methylene-5,6,7,8-tetrahydrofolate + glycine + H2O = (6S)-5,6,7,8-tetrahydrofolate + L-serine. It participates in one-carbon metabolism; tetrahydrofolate interconversion. Functionally, catalyzes the reversible interconversion of serine and glycine with tetrahydrofolate (THF) serving as the one-carbon carrier. This reaction serves as the major source of one-carbon groups required for the biosynthesis of purines, thymidylate, methionine, and other important biomolecules. In Rickettsia bellii (strain RML369-C), this protein is Probable serine hydroxymethyltransferase.